Reading from the N-terminus, the 505-residue chain is L-arabinose isomerase (505 aa).

Positions 308, 335, 352, and 453 each coordinate Mn(2+).

It belongs to the arabinose isomerase family. The cofactor is Mn(2+).

It carries out the reaction beta-L-arabinopyranose = L-ribulose. It functions in the pathway carbohydrate degradation; L-arabinose degradation via L-ribulose; D-xylulose 5-phosphate from L-arabinose (bacterial route): step 1/3. In terms of biological role, catalyzes the conversion of L-arabinose to L-ribulose. The chain is L-arabinose isomerase from Bifidobacterium animalis subsp. lactis (strain AD011).